We begin with the raw amino-acid sequence, 497 residues long: CRISPR-associated endodeoxyribonuclease Cas12f1 (497 aa).

Positions 29-122 are recognition domain (REC); the sequence is RKDLSTMSRF…PTYKITTAPI (94 aa). Residues 123–214 are wedge domain (WED); that stretch reads RLQNNIYKLI…YCIIPYTFPT (92 aa). The linker stretch occupies residues 215 to 223; that stretch reads HETVLDPDK. The tract at residues 224 to 374 is ruvC-I; sequence VMGVDLGVAK…VAINPQYTSQ (151 aa). Catalysis depends on residues D228 and E327. The interval 375 to 432 is target nucleic acid-binding (TNB); it reads RCSMCGYIEKTNRSSQAVFECKQCGYGSRTICINCRHVQVSGDVCEECGGIVKKENVN. Residues C376, C379, C395, and C398 each coordinate Zn(2+). Positions 433–453 are ruvC-II; it reads ADYNAAKNISTPYIDQIIMEK. Residue D434 is part of the active site.

It belongs to the CRISPR-associated endonuclease Cas12f family. In terms of assembly, an asymmetric homodimer. Guide RNA is probably required for dimerization. Mg(2+) serves as cofactor. Zn(2+) is required as a cofactor.

Functionally, CRISPR (clustered regularly interspaced short palindromic repeat), is an adaptive immune system that provides protection against mobile genetic elements (viruses, transposable elements and conjugative plasmids). CRISPR clusters contain sequences complementary to antecedent mobile elements and target invading nucleic acids. CRISPR clusters are transcribed and processed into CRISPR RNA (crRNA), which requires a trans-encoded small RNA (tracrRNA), but not this protein. Recognizes a short motif in the CRISPR repeat sequences (the 5' PAM or protospacer adjacent motif, TTC in this organism) to help distinguish self versus nonself, as targets within the CRISPR locus do not have PAMs. Has dsDNA endonuclease activity upon expression in E.coli of this protein, a mini CRISPR array and the probable tracrRNA. Plasmid cleavage is centered around positions 24 base pairs 3' of PAM. The mini system protects E.coli against transformation by foreign plasmids. This Syntrophomonas palmitatica (strain DSM 18709 / JCM 14374 / NBRC 102128 / MPA) protein is CRISPR-associated endodeoxyribonuclease Cas12f1.